We begin with the raw amino-acid sequence, 271 residues long: Phosphonates import ATP-binding protein PhnC 2 (271 aa).

Positions 2-246 (LTVDNLEKTY…ARDEIYRGGE (245 aa)) constitute an ABC transporter domain. ATP is bound at residue 35-42 (GPSGAGKS). Over residues 243–254 (RGGESIADREEP) the composition is skewed to basic and acidic residues. Residues 243 to 271 (RGGESIADREEPSAGNSTDADDVIAERGD) are disordered.

Belongs to the ABC transporter superfamily. Phosphonates importer (TC 3.A.1.9.1) family. In terms of assembly, the complex is composed of two ATP-binding proteins (PhnC), two transmembrane proteins (PhnE) and a solute-binding protein (PhnD).

It is found in the cell membrane. The enzyme catalyses phosphonate(out) + ATP + H2O = phosphonate(in) + ADP + phosphate + H(+). Its function is as follows. Part of the ABC transporter complex PhnCDE involved in phosphonates import. Responsible for energy coupling to the transport system. The chain is Phosphonates import ATP-binding protein PhnC 2 from Haloarcula marismortui (strain ATCC 43049 / DSM 3752 / JCM 8966 / VKM B-1809) (Halobacterium marismortui).